The following is a 225-amino-acid chain: Protein-L-isoaspartate O-methyltransferase (225 aa).

The active site involves Ser-75.

Belongs to the methyltransferase superfamily. L-isoaspartyl/D-aspartyl protein methyltransferase family.

The protein localises to the cytoplasm. It catalyses the reaction [protein]-L-isoaspartate + S-adenosyl-L-methionine = [protein]-L-isoaspartate alpha-methyl ester + S-adenosyl-L-homocysteine. Functionally, catalyzes the methyl esterification of L-isoaspartyl residues in peptides and proteins that result from spontaneous decomposition of normal L-aspartyl and L-asparaginyl residues. It plays a role in the repair and/or degradation of damaged proteins. This is Protein-L-isoaspartate O-methyltransferase from Xylella fastidiosa (strain 9a5c).